A 624-amino-acid chain; its full sequence is Adenine deaminase 1 (624 aa).

The protein belongs to the metallo-dependent hydrolases superfamily. Adenine deaminase family. Mn(2+) is required as a cofactor.

It carries out the reaction adenine + H2O + H(+) = hypoxanthine + NH4(+). This is Adenine deaminase 1 from Bradyrhizobium sp. (strain ORS 278).